A 327-amino-acid polypeptide reads, in one-letter code: Clavesin-2 (327 aa).

Positions 96–257 (IKQALKDGFP…EFGGMLPPYD (162 aa)) constitute a CRAL-TRIO domain. The segment at 289–327 (DKELSPKSMKRSQSVVDPTALKRMDKSEEENMQPLLALD) is disordered.

Forms a complex with clathrin heavy chain and gamma-adaptin.

Its subcellular location is the golgi apparatus. It is found in the trans-Golgi network membrane. The protein localises to the early endosome membrane. The protein resides in the cytoplasmic vesicle. It localises to the clathrin-coated vesicle. Required for normal morphology of late endosomes and/or lysosomes in neurons. Binds phosphatidylinositol 3,5-bisphosphate (PtdIns(3,5)P2). This Mus musculus (Mouse) protein is Clavesin-2 (Clvs2).